Consider the following 376-residue polypeptide: Secreted LysM effector LysM9 (376 aa).

Positions methionine 1 to glycine 25 are cleaved as a signal peptide. A LysM domain is found at serine 41–leucine 89. The disordered stretch occupies residues serine 190–threonine 219.

The protein belongs to the secreted LysM effector family.

It localises to the secreted. Functionally, secreted LysM effector that might have a role in sequestration of chitin oligosaccharides (breakdown products of fungal cell walls that are released during invasion and act as triggers of host immunity) to dampen host defense. In Penicillium expansum (Blue mold rot fungus), this protein is Secreted LysM effector LysM9.